The chain runs to 63 residues: Cytochrome c oxidase subunit 7C, mitochondrial (63 aa).

Residues 1–16 constitute a mitochondrion transit peptide; it reads MLGHSIRRFTTSVVRR. Residues 17–33 are Mitochondrial matrix-facing; it reads SHYEEGPGKNLPFSVKN. Lysine 25 is modified (N6-acetyllysine; alternate). Position 25 is an N6-succinyllysine; alternate (lysine 25). Residues 34–60 form a helical membrane-spanning segment; the sequence is KWALLVKMSLYFGSAFATPFLIVRHQL. The Mitochondrial intermembrane portion of the chain corresponds to 61–63; the sequence is LKQ.

The protein belongs to the cytochrome c oxidase VIIc family. In terms of assembly, component of the cytochrome c oxidase (complex IV, CIV), a multisubunit enzyme composed of 14 subunits. The complex is composed of a catalytic core of 3 subunits MT-CO1, MT-CO2 and MT-CO3, encoded in the mitochondrial DNA, and 11 supernumerary subunits COX4I, COX5A, COX5B, COX6A, COX6B, COX6C, COX7A, COX7B, COX7C, COX8 and NDUFA4, which are encoded in the nuclear genome. The complex exists as a monomer or a dimer and forms supercomplexes (SCs) in the inner mitochondrial membrane with NADH-ubiquinone oxidoreductase (complex I, CI) and ubiquinol-cytochrome c oxidoreductase (cytochrome b-c1 complex, complex III, CIII), resulting in different assemblies (supercomplex SCI(1)III(2)IV(1) and megacomplex MCI(2)III(2)IV(2)). Interacts with RAB5IF.

Its subcellular location is the mitochondrion inner membrane. The protein operates within energy metabolism; oxidative phosphorylation. Its function is as follows. Component of the cytochrome c oxidase, the last enzyme in the mitochondrial electron transport chain which drives oxidative phosphorylation. The respiratory chain contains 3 multisubunit complexes succinate dehydrogenase (complex II, CII), ubiquinol-cytochrome c oxidoreductase (cytochrome b-c1 complex, complex III, CIII) and cytochrome c oxidase (complex IV, CIV), that cooperate to transfer electrons derived from NADH and succinate to molecular oxygen, creating an electrochemical gradient over the inner membrane that drives transmembrane transport and the ATP synthase. Cytochrome c oxidase is the component of the respiratory chain that catalyzes the reduction of oxygen to water. Electrons originating from reduced cytochrome c in the intermembrane space (IMS) are transferred via the dinuclear copper A center (CU(A)) of subunit 2 and heme A of subunit 1 to the active site in subunit 1, a binuclear center (BNC) formed by heme A3 and copper B (CU(B)). The BNC reduces molecular oxygen to 2 water molecules using 4 electrons from cytochrome c in the IMS and 4 protons from the mitochondrial matrix. The polypeptide is Cytochrome c oxidase subunit 7C, mitochondrial (COX7C) (Papio hamadryas (Hamadryas baboon)).